Here is a 1765-residue protein sequence, read N- to C-terminus: Tight junction protein ZO-1 (1765 aa).

Positions 23-110 constitute a PDZ 1 domain; the sequence is TVTLHRAPGF…NAKITIRRKK (88 aa). Positions 102–112 are enriched in basic residues; that stretch reads AKITIRRKKKV. The interval 102 to 189 is disordered; sequence AKITIRRKKK…QPAKPTKVTL (88 aa). The segment covering 123–136 has biased composition (acidic residues); it reads PVSDNEDDSYDEDV. S125 carries the post-translational modification Phosphoserine. Residue Y132 is modified to Phosphotyrosine. Over residues 149–175 the composition is skewed to basic and acidic residues; that stretch reads RRGEKSWARDRSASRDRSLSPRSDRRS. Phosphoserine is present on residues S175, S178, and S179. T185 is subject to Phosphothreonine. The PDZ 2 domain maps to 186–264; the sequence is KVTLVKSRKN…KLKMVVQRDE (79 aa). Residues S212 and S241 each carry the phosphoserine modification. Phosphothreonine is present on T267. Phosphoserine occurs at positions 275, 277, 280, 284, 290, 294, 297, 300, 323, 329, 334, 337, and 353. Residues 296–363 form a disordered region; sequence ASDHSVRSHD…TPVKHVDDHT (68 aa). Positions 299–308 are enriched in basic and acidic residues; the sequence is HSVRSHDRPP. The segment covering 325-338 has biased composition (polar residues); sequence HSTQSPQQPSNGSL. Position 354 is a phosphothreonine (T354). The region spanning 421–502 is the PDZ 3 domain; the sequence is SMKLVKFRKG…GEEVTILAQK (82 aa). The region spanning 516–584 is the SH3 domain; that stretch reads GDSFYIRTHF…PNKNRAEQLA (69 aa). 2 positions are modified to phosphoserine: S617 and S622. Residues 633-876 are occludin (OCLN)-binding region; it reads YERVVLREAG…GTPPESAITR (244 aa). Positions 690-791 constitute a Guanylate kinase-like domain; sequence RLHTIKQIID…WYGALKEAIQ (102 aa). At T809 the chain carries Phosphothreonine. A phosphoserine mark is found at S810 and S821. Y822 is modified (phosphotyrosine). Phosphoserine is present on residues S824, S828, and S837. Disordered stretches follow at residues 825–941 and 1023–1042; these read APGS…PASS and ALGH…YDPQ. A phosphothreonine mark is found at T846, T848, T854, T861, and T868. The span at 879-892 shows a compositional bias: basic and acidic residues; that stretch reads EPVREDSSGMHHEN. Positions 893-906 are enriched in low complexity; the sequence is QTYPPYSPQAQPQA. At S912 the chain carries Phosphoserine. Position 1071 is a phosphoserine (S1071). The tract at residues 1092–1585 is disordered; it reads SYYDDKQPYP…SSTQPPEFDS (494 aa). Residues 1106-1124 are compositionally biased toward basic and acidic residues; that stretch reads DTQHPRDLDSRQHPEEASE. 2 positions are modified to phosphotyrosine: Y1139 and Y1164. The interval 1150-1370 is actin-binding region (ABR); the sequence is RTSTLRHEEQ…FDRRSFESKP (221 aa). Composition is skewed to basic and acidic residues over residues 1268–1285 and 1335–1346; these read KMFE…KDVN and PPEDIVRSNHYD. Residue Y1353 is modified to Phosphotyrosine. The residue at position 1365 (S1365) is a Phosphoserine. Positions 1388 to 1399 are enriched in low complexity; that stretch reads SQSQPNFSSYSS. The span at 1401–1418 shows a compositional bias: basic and acidic residues; the sequence is GKPETDAMDRSFSEKRYD. S1411 carries the phosphoserine modification. 2 stretches are compositionally biased toward polar residues: residues 1442–1468 and 1509–1519; these read NSSL…NSYI and GAEQTQKTITP. Residues 1535–1544 are compositionally biased toward basic and acidic residues; that stretch reads PFERKFESPK. Residues S1542 and S1614 each carry the phosphoserine modification. The region spanning 1631–1765 is the ZU5 domain; the sequence is ATARGIFNSN…NCVSVLIDHF (135 aa).

Belongs to the MAGUK family. As to quaternary structure, homodimer. Forms heterodimers TJP3. Forms a heterodimer (via PDZ2 domain) with TJP2/ZO2 (via PDZ2 domain). Interacts with OCLN. Interacts with CALM, claudins, CGN/cingulin, CXADR, GJA12, GJD3 and UBN1. Interacts (via ZU5 domain) with CDC42BPB and MYZAP. Interacts (via PDZ domain) with GJA1. Interacts (via PDZ domains) with ANKRD2. Interacts with BVES (via the C-terminus cytoplasmic tail). Interacts with HSPA4. Interacts with KIRREL1. Interacts with DLL1. Interacts with USP53 (via the C-terminal region). Interacts with DNMBP (via C-terminal domain); required for the apical cell-cell junction localization of DNMBP. Interacts with SPEF1. Interacts (via N-terminus) with CTNNA1. Interacts with CLDN18. Interacts with CLDN16 (via TRV motif); this is a prerequisite for anchoring of CLDN16 at the tight junction. Interacts with PKP1; the interaction facilitates TJP1/ZO-1 localization to the plasma membrane. Phosphorylated at tyrosine redidues in response to epidermal growth factor (EGF). This response is dependent on an intact actin microfilament system. Dephosphorylated by Ptprj.

The protein resides in the cell membrane. The protein localises to the cell junction. It localises to the tight junction. It is found in the gap junction. Its function is as follows. TjpP1, Tjp2, and Tjp3 are closely related scaffolding proteins that link tight junction (TJ) transmembrane proteins such as claudins, junctional adhesion molecules, and occludin to the actin cytoskeleton. The tight junction acts to limit movement of substances through the paracellular space and as a boundary between the compositionally distinct apical and basolateral plasma membrane domains of epithelial and endothelial cells. Necessary for lumenogenesis, and particularly efficient epithelial polarization and barrier formation. Plays a role in the regulation of cell migration by targeting Cdc42bpb to the leading edge of migrating cells. Plays an important role in podosome formation and associated function, thus regulating cell adhesion and matrix remodeling. With Tjp2 and Tjp3, participates in the junctional retention and stability of the transcription factor Dbpa, but is not involved in its shuttling to the nucleus. May play a role in mediating cell morphology changes during ameloblast differentiation via its role in tight junctions. This is Tight junction protein ZO-1 from Rattus norvegicus (Rat).